Here is a 370-residue protein sequence, read N- to C-terminus: S-adenosylmethionine:tRNA ribosyltransferase-isomerase (370 aa).

It belongs to the QueA family. As to quaternary structure, monomer.

It is found in the cytoplasm. The enzyme catalyses 7-aminomethyl-7-carbaguanosine(34) in tRNA + S-adenosyl-L-methionine = epoxyqueuosine(34) in tRNA + adenine + L-methionine + 2 H(+). It participates in tRNA modification; tRNA-queuosine biosynthesis. Functionally, transfers and isomerizes the ribose moiety from AdoMet to the 7-aminomethyl group of 7-deazaguanine (preQ1-tRNA) to give epoxyqueuosine (oQ-tRNA). This chain is S-adenosylmethionine:tRNA ribosyltransferase-isomerase, found in Prochlorococcus marinus (strain SARG / CCMP1375 / SS120).